The following is a 402-amino-acid chain: Arginine biosynthesis bifunctional protein ArgJ (402 aa).

The substrate site is built by Thr-152, Lys-178, Thr-189, Glu-275, Asn-397, and Thr-402. Residue Thr-189 is the Nucleophile of the active site.

It belongs to the ArgJ family. In terms of assembly, heterotetramer of two alpha and two beta chains.

The protein resides in the cytoplasm. The catalysed reaction is N(2)-acetyl-L-ornithine + L-glutamate = N-acetyl-L-glutamate + L-ornithine. The enzyme catalyses L-glutamate + acetyl-CoA = N-acetyl-L-glutamate + CoA + H(+). The protein operates within amino-acid biosynthesis; L-arginine biosynthesis; L-ornithine and N-acetyl-L-glutamate from L-glutamate and N(2)-acetyl-L-ornithine (cyclic): step 1/1. It functions in the pathway amino-acid biosynthesis; L-arginine biosynthesis; N(2)-acetyl-L-ornithine from L-glutamate: step 1/4. Functionally, catalyzes two activities which are involved in the cyclic version of arginine biosynthesis: the synthesis of N-acetylglutamate from glutamate and acetyl-CoA as the acetyl donor, and of ornithine by transacetylation between N(2)-acetylornithine and glutamate. The polypeptide is Arginine biosynthesis bifunctional protein ArgJ (Lactiplantibacillus plantarum (strain ATCC BAA-793 / NCIMB 8826 / WCFS1) (Lactobacillus plantarum)).